Here is a 138-residue protein sequence, read N- to C-terminus: Large ribosomal subunit protein uL16 (138 aa).

It belongs to the universal ribosomal protein uL16 family. In terms of assembly, part of the 50S ribosomal subunit.

Functionally, binds 23S rRNA and is also seen to make contacts with the A and possibly P site tRNAs. The chain is Large ribosomal subunit protein uL16 from Nitrosomonas europaea (strain ATCC 19718 / CIP 103999 / KCTC 2705 / NBRC 14298).